We begin with the raw amino-acid sequence, 201 residues long: Ephrin-A4 (201 aa).

The signal sequence occupies residues 1–25; sequence MRLLPLLRTVLWAAFLGSPLRGGSS. The region spanning 26 to 155 is the Ephrin RBD domain; it reads LRHVVYWNSS…RLQVSVCCKE (130 aa). N33 carries N-linked (GlcNAc...) asparagine glycosylation. 2 disulfide bridges follow: C58–C99 and C86–C144. S170 carries the GPI-anchor amidated serine lipid modification. A propeptide spans 171-201 (removed in mature form); the sequence is GTSGWRGGDTPSPLCLLLLLLLLILRLLRIL.

It belongs to the ephrin family. As to expression, expressed in the adult spleen, lymph node, prostate, ovary, small intestine, and colon, and in fetal heart, lung, liver and kidney. Also detected in hematopoietic cell lines.

It localises to the cell membrane. Its subcellular location is the secreted. In terms of biological role, cell surface GPI-bound ligand for Eph receptors, a family of receptor tyrosine kinases which are crucial for migration, repulsion and adhesion during neuronal, vascular and epithelial development. Binds promiscuously Eph receptors residing on adjacent cells, leading to contact-dependent bidirectional signaling into neighboring cells. May play a role in the interaction between activated B-lymphocytes and dendritic cells in tonsils. This Homo sapiens (Human) protein is Ephrin-A4 (EFNA4).